We begin with the raw amino-acid sequence, 119 residues long: Large ribosomal subunit protein bL20 (119 aa).

This sequence belongs to the bacterial ribosomal protein bL20 family.

Binds directly to 23S ribosomal RNA and is necessary for the in vitro assembly process of the 50S ribosomal subunit. It is not involved in the protein synthesizing functions of that subunit. In Alcanivorax borkumensis (strain ATCC 700651 / DSM 11573 / NCIMB 13689 / SK2), this protein is Large ribosomal subunit protein bL20.